Here is a 415-residue protein sequence, read N- to C-terminus: Diaminopimelate decarboxylase (415 aa).

The residue at position 54 (Lys-54) is an N6-(pyridoxal phosphate)lysine. Pyridoxal 5'-phosphate contacts are provided by residues Gly-223 and 264 to 267; that span reads EPGR. Substrate-binding residues include Arg-267, Arg-303, and Tyr-307. Cys-338 functions as the Proton donor in the catalytic mechanism. 2 residues coordinate substrate: Glu-339 and Tyr-374. Tyr-374 lines the pyridoxal 5'-phosphate pocket.

It belongs to the Orn/Lys/Arg decarboxylase class-II family. LysA subfamily. As to quaternary structure, homodimer. Pyridoxal 5'-phosphate is required as a cofactor.

It catalyses the reaction meso-2,6-diaminopimelate + H(+) = L-lysine + CO2. Its pathway is amino-acid biosynthesis; L-lysine biosynthesis via DAP pathway; L-lysine from DL-2,6-diaminopimelate: step 1/1. Specifically catalyzes the decarboxylation of meso-diaminopimelate (meso-DAP) to L-lysine. This Buchnera aphidicola subsp. Schizaphis graminum (strain Sg) protein is Diaminopimelate decarboxylase.